The following is a 545-amino-acid chain: Chaperonin GroEL 4 (545 aa).

ATP contacts are provided by residues 30–33 (TLGP), K51, 87–91 (DGTTT), G415, and D495.

This sequence belongs to the chaperonin (HSP60) family. As to quaternary structure, forms a cylinder of 14 subunits composed of two heptameric rings stacked back-to-back. Interacts with the co-chaperonin GroES.

The protein localises to the cytoplasm. The enzyme catalyses ATP + H2O + a folded polypeptide = ADP + phosphate + an unfolded polypeptide.. Together with its co-chaperonin GroES, plays an essential role in assisting protein folding. The GroEL-GroES system forms a nano-cage that allows encapsulation of the non-native substrate proteins and provides a physical environment optimized to promote and accelerate protein folding. In Rhizobium meliloti (strain 1021) (Ensifer meliloti), this protein is Chaperonin GroEL 4.